Reading from the N-terminus, the 611-residue chain is Protein Pixie (611 aa).

2 consecutive 4Fe-4S ferredoxin-type domains span residues 15–45 (RIAI…MGKL) and 54–83 (KIAS…IINL). ABC transporter domains follow at residues 78 to 323 (ITII…FLDG) and 350 to 570 (IKRM…LELL). Residues 118–125 (GQNGIGKS) and 387–394 (GENGTGKT) contribute to the ATP site.

It belongs to the ABC transporter superfamily. ABCE family. As to quaternary structure, interacts with components of eIF3 complex, namely eIF3a, eIF3j, eIF3b, eIF3c and eIF3i. Associates with the 40S ribosome subunit in an ATP-dependent manner and independently from the presence of the eIF3 complex. Forms a complex with Git and Pak; the interaction with Pak may be mediated by pix/dPIX. Ubiquitinated by Cnot4. Ubiquitination mediates the recruitment of autophagy receptors to the mitochondrial outer membrane and initiates mitophagy. As to expression, expressed in early and late larval imaginal disks (at protein level).

It localises to the cytoplasm. Functionally, plays a role in translation initiation and quality control of translation. Together with pelo and HBS1, is required for 48S complex formation from 80S ribosomes and dissociation of vacant 80S ribosomes. Stabilizes core components of eIF3 complex promoting their assembly into translation initiation-competent complexes. Together with pelo and HBS1, recognizes stalled ribosomes and promotes dissociation of elongation complexes assembled on non-stop mRNAs; this triggers endonucleolytic cleavage of the mRNA, a mechanism to release non-functional ribosomes and to degrade damaged mRNAs as part of the No-Go Decay (NGD) pathway. Plays a role in the regulation of mRNA turnover. Plays a role in quality control of translation of mitochondrial outer membrane-localized mRNA. As part of the Pink1-regulated signaling, ubiquitinated by Cnot4 upon mitochondria damage; this modification generates polyubiquitin signals that recruits autophagy receptors to the mitochondrial outer membrane to initiate mitophagy. Required in the wing disk for cell division and growth as well as cell survival. During muscle embryogenesis, required for the recruitment of Pak to muscle attachments in the embryo, hence may play a role in proper muscle morphogenesis and proper guidance and targeting of subsets of myotubes. This Drosophila melanogaster (Fruit fly) protein is Protein Pixie.